A 120-amino-acid polypeptide reads, in one-letter code: uncharacterized protein (120 aa).

The protein localises to the cytoplasm. The protein resides in the nucleus. This is an uncharacterized protein from Schizosaccharomyces pombe (strain 972 / ATCC 24843) (Fission yeast).